The primary structure comprises 189 residues: MPKVSDTDLAERKVEILSGARHCFATYGYDGATVARLEETIGKSRGAIFHHYGNKDQLFLEVAHEDMRKMAELAADEGLIGAIRTLVKSNDLTDWWGMRVEITRRVNIDPCFAAKWELDQLALRETVRTRLREQRASGRIRKDVEIETIAQTLELVLEGVLGRLAQRQGTEGLSDALDFVESALRSPGH.

An HTH tetR-type domain is found at Ala-10–Met-70. The segment at residues Thr-33–Tyr-52 is a DNA-binding region (H-T-H motif). Citrate contacts are provided by residues Leu-79 to Ile-80, Arg-130, and Gln-134. Residue Glu-181 participates in Mg(2+) binding. A citrate-binding site is contributed by Arg-185.

As to quaternary structure, homodimer.

Its function is as follows. AcnR negatively controls the expression of the aconitase gene acn. The polypeptide is HTH-type transcriptional repressor AcnR (Corynebacterium jeikeium (strain K411)).